The primary structure comprises 567 residues: Alpha-glucosidase (567 aa).

The first 17 residues, 1–17 (MKAVIVFCLMALSIVDA), serve as a signal peptide directing secretion. 2 N-linked (GlcNAc...) asparagine glycosylation sites follow: N88 and N123. D223 (nucleophile) is an active-site residue. N247 carries N-linked (GlcNAc...) asparagine glycosylation. Residue E286 is the Proton donor of the active site. N-linked (GlcNAc...) asparagine glycosylation is found at N290, N313, N319, N499, and N507.

Monomer. Expressed specifically in the hypopharyngeal glands of worker bees. Also found in the brain of worker bees (at protein level).

The catalysed reaction is Hydrolysis of terminal, non-reducing (1-&gt;4)-linked alpha-D-glucose residues with release of alpha-D-glucose.. Its function is as follows. Converts sucrose in nectar to glucose and fructose. This chain is Alpha-glucosidase, found in Apis mellifera (Honeybee).